The following is a 212-amino-acid chain: Adenine phosphoribosyltransferase (212 aa).

This sequence belongs to the purine/pyrimidine phosphoribosyltransferase family. In terms of assembly, homodimer.

It is found in the cytoplasm. It carries out the reaction AMP + diphosphate = 5-phospho-alpha-D-ribose 1-diphosphate + adenine. Its pathway is purine metabolism; AMP biosynthesis via salvage pathway; AMP from adenine: step 1/1. Catalyzes a salvage reaction resulting in the formation of AMP, that is energically less costly than de novo synthesis. The chain is Adenine phosphoribosyltransferase from Mycobacterium tuberculosis (strain CDC 1551 / Oshkosh).